A 264-amino-acid chain; its full sequence is Hemin import ATP-binding protein HmuV (264 aa).

An ABC transporter domain is found at 2–241 (IEVSGLSVRL…ATMLSVFGCA (240 aa)). 34-41 (GPNGSGKT) provides a ligand contact to ATP.

This sequence belongs to the ABC transporter superfamily. Heme (hemin) importer (TC 3.A.1.14.5) family. The complex is composed of two ATP-binding proteins (HmuV), two transmembrane proteins (HmuU) and a solute-binding protein (HmuT).

Its subcellular location is the cell inner membrane. In terms of biological role, part of the ABC transporter complex HmuTUV involved in hemin import. Responsible for energy coupling to the transport system. This is Hemin import ATP-binding protein HmuV from Rhizobium etli (strain ATCC 51251 / DSM 11541 / JCM 21823 / NBRC 15573 / CFN 42).